We begin with the raw amino-acid sequence, 511 residues long: Apolipoprotein N-acyltransferase (511 aa).

6 helical membrane passes run 7-25, 58-78, 90-110, 125-145, 163-183, and 192-212; these read PGWP…TPLA, GWWY…VSIH, FLML…AWLW, LAFA…LTGF, VPVG…ALLV, and GASL…GLYL. A CN hydrolase domain is found at 230–470; that stretch reads IQGNIAQELK…QGILRGEVIP (241 aa). Glutamate 269 (proton acceptor) is an active-site residue. The active site involves lysine 330. Cysteine 382 functions as the Nucleophile in the catalytic mechanism. The chain crosses the membrane as a helical span at residues 478-498; it reads LQYRVWPLAGLAGVLLLWALL.

This sequence belongs to the CN hydrolase family. Apolipoprotein N-acyltransferase subfamily.

The protein resides in the cell inner membrane. The enzyme catalyses N-terminal S-1,2-diacyl-sn-glyceryl-L-cysteinyl-[lipoprotein] + a glycerophospholipid = N-acyl-S-1,2-diacyl-sn-glyceryl-L-cysteinyl-[lipoprotein] + a 2-acyl-sn-glycero-3-phospholipid + H(+). The protein operates within protein modification; lipoprotein biosynthesis (N-acyl transfer). Functionally, catalyzes the phospholipid dependent N-acylation of the N-terminal cysteine of apolipoprotein, the last step in lipoprotein maturation. The sequence is that of Apolipoprotein N-acyltransferase from Pseudomonas paraeruginosa (strain DSM 24068 / PA7) (Pseudomonas aeruginosa (strain PA7)).